We begin with the raw amino-acid sequence, 410 residues long: ORC1-type DNA replication protein 2 (410 aa).

Residues 60–65, Tyr213, and Arg225 contribute to the ATP site; that span reads GIGKTT.

The protein belongs to the CDC6/cdc18 family.

In terms of biological role, involved in regulation of DNA replication. Binds DNA. The polypeptide is ORC1-type DNA replication protein 2 (orc2) (Aeropyrum pernix (strain ATCC 700893 / DSM 11879 / JCM 9820 / NBRC 100138 / K1)).